A 218-amino-acid polypeptide reads, in one-letter code: Adenylate kinase (218 aa).

10 to 15 (GAGKGT) provides a ligand contact to ATP. Residues 30 to 59 (STGDMLRAAVKAGTPLGIAAKKIMDEGGLV) are NMP. AMP contacts are provided by residues T31, R36, 57 to 59 (GLV), 85 to 88 (GFPR), and Q92. An LID region spans residues 122–159 (GRRVHPASGRTYHVKFNPPKVAGKDDLTGEELIQRDDD). Residues R123 and 132-133 (TY) each bind ATP. The AMP site is built by R156 and R167. An ATP-binding site is contributed by G203.

This sequence belongs to the adenylate kinase family. Monomer.

The protein localises to the cytoplasm. The enzyme catalyses AMP + ATP = 2 ADP. Its pathway is purine metabolism; AMP biosynthesis via salvage pathway; AMP from ADP: step 1/1. Its function is as follows. Catalyzes the reversible transfer of the terminal phosphate group between ATP and AMP. Plays an important role in cellular energy homeostasis and in adenine nucleotide metabolism. This Janthinobacterium sp. (strain Marseille) (Minibacterium massiliensis) protein is Adenylate kinase.